The primary structure comprises 842 residues: Protein P (842 aa).

The interval Met1–Gln177 is terminal protein domain (TP). A spacer region spans residues Glu178–Leu345. The segment at Asp186 to Ser273 is disordered. The span at Gly223 to Ser239 shows a compositional bias: polar residues. The tract at residues Glu346–Gln689 is polymerase/reverse transcriptase domain (RT). Positions Arg356 to Ile599 constitute a Reverse transcriptase domain. The Mg(2+) site is built by Asp428, Asp550, and Asp551.

It belongs to the hepadnaviridae P protein family.

The enzyme catalyses DNA(n) + a 2'-deoxyribonucleoside 5'-triphosphate = DNA(n+1) + diphosphate. It carries out the reaction Endonucleolytic cleavage to 5'-phosphomonoester.. With respect to regulation, activated by host HSP70 and HSP40 in vitro to be able to bind the epsilon loop of the pgRNA. Because deletion of the RNase H region renders the protein partly chaperone-independent, the chaperones may be needed indirectly to relieve occlusion of the RNA-binding site by this domain. Inhibited by several reverse-transcriptase inhibitors: Lamivudine, Adefovir and Entecavir. In terms of biological role, multifunctional enzyme that converts the viral RNA genome into dsDNA in viral cytoplasmic capsids. This enzyme displays a DNA polymerase activity that can copy either DNA or RNA templates, and a ribonuclease H (RNase H) activity that cleaves the RNA strand of RNA-DNA heteroduplexes in a partially processive 3'- to 5'-endonucleasic mode. Neo-synthesized pregenomic RNA (pgRNA) are encapsidated together with the P protein, and reverse-transcribed inside the nucleocapsid. Initiation of reverse-transcription occurs first by binding the epsilon loop on the pgRNA genome, and is initiated by protein priming, thereby the 5'-end of (-)DNA is covalently linked to P protein. Partial (+)DNA is synthesized from the (-)DNA template and generates the relaxed circular DNA (RC-DNA) genome. After budding and infection, the RC-DNA migrates in the nucleus, and is converted into a plasmid-like covalently closed circular DNA (cccDNA). The activity of P protein does not seem to be necessary for cccDNA generation, and is presumably released from (+)DNA by host nuclear DNA repair machinery. This chain is Protein P, found in Homo sapiens (Human).